We begin with the raw amino-acid sequence, 200 residues long: Coiled-coil domain-containing protein 85B (200 aa).

A coiled-coil region spans residues 57–84 (LQGHLLEIRELKVINQRLQEENQELRDL). The span at 178–188 (DGSSSTGSVGS) shows a compositional bias: low complexity. The tract at residues 178 to 200 (DGSSSTGSVGSPDQLHLVCSPDD) is disordered.

This sequence belongs to the CCDC85 family.

Its subcellular location is the nucleus. It localises to the cytoplasm. The protein resides in the cytoskeleton. It is found in the microtubule organizing center. The protein localises to the centrosome. Its subcellular location is the cell junction. It localises to the adherens junction. Functionally, functions as a transcriptional repressor. May inhibit the activity of CTNNB1 in a TP53-dependent manner and thus regulate cell growth. May function in adipocyte differentiation, negatively regulating mitotic clonal expansion. Plays a role in cell-cell adhesion and epithelium development through its interaction with proteins of the beta-catenin family. This is Coiled-coil domain-containing protein 85B (ccdc85b) from Danio rerio (Zebrafish).